The primary structure comprises 603 residues: MTDVPAVRIRNFCIIAHIDHGKSTLADRLLQATGTVDERQMKEQFLDNMDLERERGITIKLQAARMNYQAKDGQQYVLNLIDTPGHVDFSYEVSRSLAACEGALLVVDASQGVEAQTLANVYLALEHNLEIIPVLNKIDLPGAEPDRVVGEIEEIIGLDCSGAILASAKEGIGINEILEAVVERVPPPPNTVDQRLRALIFDSYYDIYRGVIVYFRVMDGTVKKGDRVYLMASEKEYEIDELGVLSPTQKPVNELHAGEVGYFGAAIKAVADARVGDTITLCNAKATEALPGYTEANPMVFCGMFPIDADQFEDLREALEKLRLNDAALQYEPETSSAMGFGFRCGFLGLLHMEIVQERLEREYDLDLIITAPSVVYKVITTKGEELYIDNPSHLPAPNDRERIEEPYVKVEMITPETYVGTLMELSQNRRGIFKDMKYLTQGRTTLTYEIPLAEVVTDFFDQMKSRSRGYASMEYHLIGYRENPLVKLDIMINGDPVDSLAMIVHRDKAYGMGRSMAEKLKELIPRHQFKVPIQASIGSKVIASEHIPALRKDVLAKCYGGDISRKKKLLQKQAKGKKRMKSVGTVDVPQEAFMAVLRLDQS.

The region spanning 7 to 189 (VRIRNFCIIA…AVVERVPPPP (183 aa)) is the tr-type G domain. Residues 19–24 (DHGKST) and 136–139 (NKID) each bind GTP.

It belongs to the TRAFAC class translation factor GTPase superfamily. Classic translation factor GTPase family. LepA subfamily.

It localises to the cell inner membrane. The enzyme catalyses GTP + H2O = GDP + phosphate + H(+). Required for accurate and efficient protein synthesis under certain stress conditions. May act as a fidelity factor of the translation reaction, by catalyzing a one-codon backward translocation of tRNAs on improperly translocated ribosomes. Back-translocation proceeds from a post-translocation (POST) complex to a pre-translocation (PRE) complex, thus giving elongation factor G a second chance to translocate the tRNAs correctly. Binds to ribosomes in a GTP-dependent manner. The polypeptide is Elongation factor 4 (Nostoc sp. (strain PCC 7120 / SAG 25.82 / UTEX 2576)).